A 37-amino-acid polypeptide reads, in one-letter code: MKVRASVKKICEKCSVIKRRGRVMVICVNPKHKQRQG.

The protein belongs to the bacterial ribosomal protein bL36 family.

In Nostoc punctiforme (strain ATCC 29133 / PCC 73102), this protein is Large ribosomal subunit protein bL36.